A 511-amino-acid polypeptide reads, in one-letter code: MAGLSDLELRRELQALGFQPGPITDTTRNVYRNKLRRLRGEARLRDDERLREDAGPREDAGPRGPERQREEARLREEAPLRARPAASVLRSEPWPLSPSPPAPSAASDASGPYGNFGASASPWAASRGLSYPPHAGPGPLRRRASVRGSSEDDEDTRTPDRHAPGRGRHWWAPPSASARPHSALLGADARPGLKGSRTGSAGAGRTRPEVGRWLERCLSRLLLWASLGLLLGFLAILWVKMGKPSAPQEAEDNMKLLPVDCERKTDEFCQAKQKAALLELLHELYNFLAIQAGNFECGNPEKLKSKCIPVLEAQEYIANVTSSPSSRFKAALTWILSSNKDVGIWLKGEDPSELATTVDKVVCLESARPRMGIGCRLSRALLTAVTHVLIFFWCLAFLWGLLILLKYRWRKLEEEEQAMYEMVKKIIDVVQDHYVDWEQDMERYPYVGILHVRDSLIPPQSRRRMKRVWDRAVEFLASNESRIQTESHRVAGEDMLVWRWTKPSSFSDSER.

Position 2 is an N-acetylalanine (Ala2). The LEM domain occupies 2–42; that stretch reads AGLSDLELRRELQALGFQPGPITDTTRNVYRNKLRRLRGEA. Disordered regions lie at residues 18-110 and 128-206; these read FQPG…SDAS and GLSY…AGRT. Residues 38-80 show a composition bias toward basic and acidic residues; the sequence is LRGEARLRDDERLREDAGPREDAGPRGPERQREEARLREEAPL. Residues 80 to 112 form an interaction with lamin A/C complexes region; sequence LRARPAASVLRSEPWPLSPSPPAPSAASDASGP. The tract at residues 80–141 is required for nuclear retention and interaction with LMNA isoform C; sequence LRARPAASVL…PPHAGPGPLR (62 aa). Low complexity-rich tracts occupy residues 81–94 and 172–183; these read RARPAASVLRSEPW and APPSASARPHSA. The next 2 membrane-spanning stretches (helical) occupy residues 221-241 and 385-405; these read LLLWASLGLLLGFLAILWVKM and VTHVLIFFWCLAFLWGLLILL. The winged-Helix (WH) stretch occupies residues 403 to 511; sequence ILLKYRWRKL…KPSSFSDSER (109 aa). Ser505, Ser507, and Ser509 each carry phosphoserine.

In terms of assembly, interacts (via N-terminus) with LMNA isoform C (via C-terminus) (in vitro). Interacts (via LEM domain) with BANF1. Interacts (via C-terminus) with CHMP7. Interacts (via N-terminus) with tubulin; the interaction causes microtubule bundling and stabilization (in vitro). Post-translationally, phosphorylated; strongly phosphorylated in mitosis compared to G1/S. Ubiquitously expressed, including liver, brain, heart, skeletal muscle, lung, testis, spleen, kidney and white adipose tissue.

Its subcellular location is the nucleus inner membrane. It is found in the nucleus envelope. The protein resides in the cytoplasm. It localises to the cytoskeleton. The protein localises to the spindle. Functionally, nuclear lamina-associated inner nuclear membrane protein that is involved in nuclear structure organization and maintenance of nuclear envelope (NE) integrity and NE reformation after mitosis. Plays a role as transmembrane adapter for the endosomal sorting complexes required for transport (ESCRT), and is thereby involved in ESCRT-mediated NE reformation. Promotes ESCRT-mediated NE closure by recruiting CHMP7 and downstream ESCRT-III proteins IST1/CHMP8 and CHMP2A to the reforming NE during anaphase. During nuclear reassembly, condenses into a liquid-like coating around microtubule spindles and coassembles with CHMP7 to form a macromolecular O-ring seal at the confluence between membranes, chromatin, and the spindle to facilitate early nuclear sealing. Plays a role in the organization of heterochromatin associated with the NE and in the maintenance of NE organization under mechanical stress. Required for embryonic development and is involved in regulation of several signaling pathways such as MAPK and AKT. Required for myoblast differentiation involving regulation of ERK signaling. Essential for cardiac homeostasis and proper heart function. This is LEM domain-containing protein 2 (Lemd2) from Mus musculus (Mouse).